The chain runs to 246 residues: 3-deoxy-manno-octulosonate cytidylyltransferase (246 aa).

Belongs to the KdsB family.

It localises to the cytoplasm. It carries out the reaction 3-deoxy-alpha-D-manno-oct-2-ulosonate + CTP = CMP-3-deoxy-beta-D-manno-octulosonate + diphosphate. It functions in the pathway nucleotide-sugar biosynthesis; CMP-3-deoxy-D-manno-octulosonate biosynthesis; CMP-3-deoxy-D-manno-octulosonate from 3-deoxy-D-manno-octulosonate and CTP: step 1/1. The protein operates within bacterial outer membrane biogenesis; lipopolysaccharide biosynthesis. Activates KDO (a required 8-carbon sugar) for incorporation into bacterial lipopolysaccharide in Gram-negative bacteria. In Bradyrhizobium diazoefficiens (strain JCM 10833 / BCRC 13528 / IAM 13628 / NBRC 14792 / USDA 110), this protein is 3-deoxy-manno-octulosonate cytidylyltransferase.